Here is a 644-residue protein sequence, read N- to C-terminus: Protein lin-9 (644 aa).

Residues 1–77 (MSSAVRSPRK…GRDSPSVNSL (77 aa)) are disordered. Over residues 50 to 62 (SIKRTGSPKKSPA) the composition is skewed to basic residues.

It belongs to the lin-9 family. Component of the DRM complex, at least composed of lin-9, lin-35, lin-37, lin-52, lin-53, lin-54- dpl-1 and efl-1. Interacts with zft-11; the interaction is required to suppress the activation of non-neuronal genes in neurons.

Its subcellular location is the nucleus. In terms of biological role, synthetic multivulva class B (synMuvB) protein. SynMuvB proteins are required to repress the induction of vulval development by Ras signaling and probably act by forming the multiprotein DRM complex that represses transcription. Required for the development of sheath cells in the hermaphrodite gonad and for the development of the male spicule, rays and gonad. In association with the zinc finger protein ztf-11, negatively regulates the expression of non-neuronal genes during neurogenesis. The chain is Protein lin-9 from Caenorhabditis elegans.